The sequence spans 405 residues: Protochlorophyllide reductase A, chloroplastic (405 aa).

The transit peptide at 1 to 69 (MALQAASLVS…LRNNKAIIRA (69 aa)) directs the protein to the chloroplast.

Belongs to the short-chain dehydrogenases/reductases (SDR) family. POR subfamily. In terms of assembly, forms large complexes including TOC33, pPORA and OEP161 during pPORA import into plastids at the plastid envelope membrane. Interacts with CPP1 during plastid import. As to expression, expressed in young seedlings. Not detected in leaves.

The protein localises to the plastid. Its subcellular location is the chloroplast. It carries out the reaction chlorophyllide a + NADP(+) = protochlorophyllide a + NADPH + H(+). The protein operates within porphyrin-containing compound metabolism; chlorophyll biosynthesis. Phototransformation of protochlorophyllide (Pchlide) to chlorophyllide (Chlide). PORA may also function as a photoprotectant during the transitory stage from dark to light. Functions in skotomorphogenesis, photomorphogenesis and throughout the plant life under specific light conditions. This is Protochlorophyllide reductase A, chloroplastic (PORA) from Arabidopsis thaliana (Mouse-ear cress).